The following is a 255-amino-acid chain: Acetylglutamate kinase (255 aa).

Substrate contacts are provided by residues 40 to 41 (GG), Arg-62, and Asn-153.

It belongs to the acetylglutamate kinase family. ArgB subfamily.

Its subcellular location is the cytoplasm. The catalysed reaction is N-acetyl-L-glutamate + ATP = N-acetyl-L-glutamyl 5-phosphate + ADP. It participates in amino-acid biosynthesis; L-arginine biosynthesis; N(2)-acetyl-L-ornithine from L-glutamate: step 2/4. Catalyzes the ATP-dependent phosphorylation of N-acetyl-L-glutamate. In Bacillus mycoides (strain KBAB4) (Bacillus weihenstephanensis), this protein is Acetylglutamate kinase.